A 360-amino-acid polypeptide reads, in one-letter code: Phenylalanine--tRNA ligase alpha subunit (360 aa).

Glutamate 260 contacts Mg(2+).

Belongs to the class-II aminoacyl-tRNA synthetase family. Phe-tRNA synthetase alpha subunit type 1 subfamily. In terms of assembly, tetramer of two alpha and two beta subunits. Mg(2+) serves as cofactor.

It localises to the cytoplasm. The enzyme catalyses tRNA(Phe) + L-phenylalanine + ATP = L-phenylalanyl-tRNA(Phe) + AMP + diphosphate + H(+). The sequence is that of Phenylalanine--tRNA ligase alpha subunit from Bradyrhizobium sp. (strain ORS 278).